Consider the following 217-residue polypeptide: MHRNDSQRLGKPGGAPESLQMANNNFLSTLSPEHCRPLAGECMNKLKCGAAEAEIMNLPERVGTFSAIPALGGISLPPGVIVMTALHSPAAASAAVTDSAFQIANLADCPQNNSSGAGGNPAKKKRKRCGVCVPCKRLINCGVCSSCRNRKTGHQICKFRKCEELKKKPGTSLEVRGDDSFFPCLASSLIPPFSPPFQCFLSPFKMHHSFSESPSRL.

The tract at residues 1-20 is disordered; sequence MHRNDSQRLGKPGGAPESLQ. The CXXC-type zinc finger occupies 122 to 163; that stretch reads AKKKRKRCGVCVPCKRLINCGVCSSCRNRKTGHQICKFRKCE. The Zn(2+) site is built by C129, C132, C135, C141, C144, C147, C157, and C162.

The protein resides in the cytoplasm. Its function is as follows. Acts as a negative regulator of the Wnt signaling pathway required for anterior neural structure formation. Ectopic expression induces ventralization. Binds preferentially to DNA containing cytidine-phosphate-guanosine (CpG) dinucleotides over CpH (H=A, T, and C), hemimethylated-CpG and hemimethylated-hydroxymethyl-CpG. In Xenopus laevis (African clawed frog), this protein is CXXC-type zinc finger protein 4 (cxxc4).